A 244-amino-acid chain; its full sequence is Carbonic anhydrase (244 aa).

Positions 1–19 (MKGKLSIALMLSVCFSASA) are cleaved as a signal peptide. Positions 23–244 (VHWGYEGNGD…QPLNGRIIIH (222 aa)) constitute an Alpha-carbonic anhydrase domain. A disulfide bond links cysteine 46 and cysteine 199. Catalysis depends on histidine 84, which acts as the Proton acceptor. Residues histidine 109, histidine 111, and histidine 128 each contribute to the Zn(2+) site. 195-196 (TT) is a binding site for substrate.

It belongs to the alpha-carbonic anhydrase family. Zn(2+) is required as a cofactor.

It is found in the periplasm. The catalysed reaction is hydrogencarbonate + H(+) = CO2 + H2O. Its function is as follows. Reversible hydration of carbon dioxide. The chain is Carbonic anhydrase (cah) from Pectobacterium carotovorum (Erwinia carotovora).